A 258-amino-acid chain; its full sequence is Phosphoprotein ECPP44 (258 aa).

3 disordered regions span residues 1–25, 46–131, and 148–175; these read MASD…DRGL, EKVQ…PVEV, and KLPG…VDCA. Composition is skewed to basic and acidic residues over residues 11 to 25, 46 to 80, 109 to 124, and 148 to 158; these read SVEK…DRGL, EKVQ…EKLH, GLKE…KEED, and KLPGGGKKVEE.

Belongs to the plant dehydrin family. Post-translationally, phosphorylated in embryogenic and somatic embryos. Not phosphorylated in non-embryogenic cells.

In terms of biological role, phosphorylation of ECCP44 protein is thought to be involved in the acquisition of embryogenic competence. Unlike other dehydrins, it is not thought to function as an environmental stress tolerant. The polypeptide is Phosphoprotein ECPP44 (ECPP44) (Daucus carota (Wild carrot)).